The following is a 102-amino-acid chain: Large ribosomal subunit protein bL21 (102 aa).

The protein belongs to the bacterial ribosomal protein bL21 family. Part of the 50S ribosomal subunit. Contacts protein L20.

In terms of biological role, this protein binds to 23S rRNA in the presence of protein L20. The protein is Large ribosomal subunit protein bL21 of Pseudarthrobacter chlorophenolicus (strain ATCC 700700 / DSM 12829 / CIP 107037 / JCM 12360 / KCTC 9906 / NCIMB 13794 / A6) (Arthrobacter chlorophenolicus).